The following is a 233-amino-acid chain: Phosphoribosylformylglycinamidine synthase subunit PurQ (233 aa).

The 231-residue stretch at 3–233 folds into the Glutamine amidotransferase type-1 domain; it reads AAILVFPGIN…GLAQHLEKAA (231 aa). Catalysis depends on C87, which acts as the Nucleophile. Catalysis depends on residues H204 and E206.

Part of the FGAM synthase complex composed of 1 PurL, 1 PurQ and 2 PurS subunits.

The protein resides in the cytoplasm. The enzyme catalyses N(2)-formyl-N(1)-(5-phospho-beta-D-ribosyl)glycinamide + L-glutamine + ATP + H2O = 2-formamido-N(1)-(5-O-phospho-beta-D-ribosyl)acetamidine + L-glutamate + ADP + phosphate + H(+). It catalyses the reaction L-glutamine + H2O = L-glutamate + NH4(+). Its pathway is purine metabolism; IMP biosynthesis via de novo pathway; 5-amino-1-(5-phospho-D-ribosyl)imidazole from N(2)-formyl-N(1)-(5-phospho-D-ribosyl)glycinamide: step 1/2. Part of the phosphoribosylformylglycinamidine synthase complex involved in the purines biosynthetic pathway. Catalyzes the ATP-dependent conversion of formylglycinamide ribonucleotide (FGAR) and glutamine to yield formylglycinamidine ribonucleotide (FGAM) and glutamate. The FGAM synthase complex is composed of three subunits. PurQ produces an ammonia molecule by converting glutamine to glutamate. PurL transfers the ammonia molecule to FGAR to form FGAM in an ATP-dependent manner. PurS interacts with PurQ and PurL and is thought to assist in the transfer of the ammonia molecule from PurQ to PurL. This is Phosphoribosylformylglycinamidine synthase subunit PurQ from Bradyrhizobium diazoefficiens (strain JCM 10833 / BCRC 13528 / IAM 13628 / NBRC 14792 / USDA 110).